A 149-amino-acid polypeptide reads, in one-letter code: Large ribosomal subunit protein uL16 (149 aa).

Belongs to the universal ribosomal protein uL16 family. Part of the 50S ribosomal subunit.

Functionally, binds 23S rRNA and is also seen to make contacts with the A and possibly P site tRNAs. The polypeptide is Large ribosomal subunit protein uL16 (Dehalococcoides mccartyi (strain ATCC BAA-2100 / JCM 16839 / KCTC 5957 / BAV1)).